The following is a 55-amino-acid chain: Neurotoxin B-II (55 aa).

P10 is subject to Hydroxyproline. Disulfide bonds link C12–C48, C16–C52, C23–C41, and C26–C37.

This sequence belongs to the worm B-toxin family.

It is found in the secreted. This toxin increases the excitability of nerves by delaying the inactivation of the voltage-gated sodium channel (Nav). Only acts on some crustacean. Neurotoxin B-II is less abundant, but 15-fold more toxic than neurotoxin B-VI. This is Neurotoxin B-II from Cerebratulus lacteus (Milky ribbon worm).